A 557-amino-acid chain; its full sequence is uncharacterized protein (557 aa).

One can recognise a Helicase ATP-binding domain in the interval lysine 70–glycine 224. Alanine 82–threonine 90 contributes to the ATP binding site. The DEAH box motif lies at aspartate 175–histidine 178. The Helicase C-terminal domain occupies glutamine 363–leucine 524.

It belongs to the SNF2/RAD54 helicase family.

This is an uncharacterized protein from Bacillus subtilis (strain 168).